We begin with the raw amino-acid sequence, 422 residues long: Ribonuclease Y (422 aa).

Residues 112–172 (TTNIVKLPSD…IRREIATRTL (61 aa)) form the KH domain. Residues 238–331 (VLAHSIEVAK…VAIADSISAS (94 aa)) form the HD domain.

It belongs to the RNase Y family.

Functionally, endoribonuclease that initiates mRNA decay. The sequence is that of Ribonuclease Y from Mycoplasma mycoides.